The sequence spans 118 residues: UPF0295 protein BA_0538/GBAA_0538/BAS0506 (118 aa).

2 helical membrane passes run 12–32 (IRTF…LGVF) and 43–63 (FMMV…WIGM).

This sequence belongs to the UPF0295 family.

It localises to the cell membrane. This Bacillus anthracis protein is UPF0295 protein BA_0538/GBAA_0538/BAS0506.